The chain runs to 1030 residues: MENQGGDYSPNGFSNSASNMNAVFNNEITGRSDISNVNHQTGTPRLVPETQIWSMPVPDQLMTMPNRENTLMTGSTIGPNIPMNVAYPNTIYSPTEHQSQFQTQQNRDISTMMEHTNSNDMSGSGKNLKKRVSKACDHCRKRKIRCDEVDQQTKKCSNCIKFQLPCTFKHRDEILKKKRKLEIKHHATPGESLQTSNSISNPVASSSVPNSGRFELLNGNSPLESNIIDKVSNIQNNLNKKMNSKIEKLDRKMSYIIDSVARLEWLLDKAVKKQEGKYKEKNNLPKPARKIYSTALLTAQKLYWFKQSLGVKASNEEFLSPISEILSISLKWYATQMKKFMDLSSPAFFSSEIILYSLPPKKQAKRLLENFHATLLSSVTGIISLKECLDLAEKYYSESGEKLTYPEHLLLNVCLCSGASATQSIIRGDSKFLRKDRYDPTSQELKKIENVALLNAMYYYHKLSTICSGTRTLQALLLLNRYFQLTYDTELANCILGTAIRLAVDMELNRKSSYKSLDFEEAIRRRRMWWHCFCTDKLYSLMLSRPPIVGERDMDMLTDQNYYEVIKTNILPDLIDKKEDLDKITDVNSALNVVVNFCQHISLFISYYVSKLVSIESKIYSTCFAVRSTLDLSFDAMLDKIKDLNDSLNNWRDNLHVSMKLKSYKQYLSVLYAQKSQENPALSFEIACSRVLNCHFRALYSKVILSMMTTSLLIDNERLYKGSRHDIPQLFILFSSQYLNASKEMLQLFQGINYQAHMYNEVMYQFSTAMFVLFFYVVDNMNDLKKKGEVKEIIDILKKSYDRLVGENDEQLLFDNVKWNTLIVFYSHFLKYVLQRYHALNDSTSIFDSKPYDETITKVIMHSRKIKDETVDQLIMSLKSYGSLHSLQKGNEADLADDGLNTNDISSEDFAEEAPINLFGELSVEILKLLKSHSPISNFGDLSPSSNRKGISDDSSLYPIRSDLTSLVYPIHSSDTGDTLSSGLETPENSNFNSDSGIKEDFEAFRALLPLGKLIYDRDYSFVNTFRDYE.

Residues 136–166 (CDHCRKRKIRCDEVDQQTKKCSNCIKFQLPC) constitute a DNA-binding region (zn(2)-C6 fungal-type). The disordered stretch occupies residues 185 to 208 (HHATPGESLQTSNSISNPVASSSV). A compositionally biased stretch (low complexity) spans 196-208 (SNSISNPVASSSV). Residues serine 221 and serine 937 each carry the phosphoserine modification.

Its subcellular location is the cytoplasm. It is found in the nucleus. In terms of biological role, putative transcription factor involved in halotolerance. This chain is Halotolerance protein 9 (HAL9), found in Saccharomyces cerevisiae (strain ATCC 204508 / S288c) (Baker's yeast).